The following is a 165-amino-acid chain: UI (165 aa).

The signal sequence occupies residues 1 to 18; sequence MKPVPLILLLATVLLSSH. Position 163 is a valine amide (Val-163).

It belongs to the sauvagine/corticotropin-releasing factor/urotensin I family.

It is found in the secreted. In terms of biological role, urotensin is found in the teleost caudal neurosecretory system. It has a suggested role in osmoregulation and as a corticotropin-releasing factor. The non-hormonal portion of this precursor may be a urotensin binding protein, urophysin. The polypeptide is UI (Oncorhynchus mykiss (Rainbow trout)).